The sequence spans 558 residues: MHAGGKYCGPRHCSFYIIAFLICQLFFLVIFIRNDDASSANELLSFMNESEESDHLDWRVFISHTPETSEDFYQYNIHLSNALGLIRKLPVTRHHSCTTRNSILPAPLEANVSVVISFHNEARSMLLRTIVSLLSRSPEDYLHELILVDDGSQRDVTLLDDLKRWMGGVFGSRYRLGLTFLRNQERMGLIWSRNRGASLASGRYVLFLDSHCEVNEGWLEPLLERLALNTNLAVSPLLDPIDPTTLSYRKGNELLKGGFDWSLHFHWLKRQLTNQESLEMPYQSPAFAGGVLMMSREWFLKLGSFNPYLKIWGGESIELAIKLWLCGGQIEIVPCSRIGHIFRRRHAFDFPPQSDRQLSPAQETYLHNSKIIAESWLDEYKNMFYALRPAARRIPLDHTYDELQRMRKERRCHPFEWYLRHVSPELRMHFDELSATGTLRNEDRCVHARQKDSQPILASCYLSDITQWSMLRQSGQLSTHRELCLAVGFGMRIALEPCGRNETVRRSQRWVRLGTHLLHAESHLCLDNPLKDRLEMSTCRSHAVSQSFQFALEMEGQT.

At 1 to 12 the chain is on the cytoplasmic side; sequence MHAGGKYCGPRH. A helical; Signal-anchor for type II membrane protein transmembrane segment spans residues 13 to 32; the sequence is CSFYIIAFLICQLFFLVIFI. The Lumenal segment spans residues 33-558; it reads RNDDASSANE…QFALEMEGQT (526 aa). 2 N-linked (GlcNAc...) asparagine glycosylation sites follow: Asn-48 and Asn-111. Disulfide bonds link Cys-97–Cys-335, Cys-326–Cys-412, Cys-445–Cys-460, and Cys-484–Cys-498. The catalytic subdomain A stretch occupies residues 109–225; the sequence is EANVSVVISF…EGWLEPLLER (117 aa). The substrate site is built by Asp-150 and Arg-186. Asp-209 lines the Mn(2+) pocket. A substrate-binding site is contributed by Ser-210. His-211 contacts Mn(2+). The catalytic subdomain B stretch occupies residues 281-343; sequence PYQSPAFAGG…PCSRIGHIFR (63 aa). Residue Trp-312 participates in substrate binding. His-340 contacts Mn(2+). Residues Arg-343 and His-346 each contribute to the substrate site. The region spanning 422–556 is the Ricin B-type lectin domain; sequence VSPELRMHFD…SFQFALEMEG (135 aa). Residue Asn-501 is glycosylated (N-linked (GlcNAc...) asparagine). The cysteines at positions 525 and 539 are disulfide-linked.

Belongs to the glycosyltransferase 2 family. GalNAc-T subfamily. Mn(2+) is required as a cofactor. As to expression, during embryonic stages 16-17, very weak expression in the midgut.

The protein localises to the golgi apparatus membrane. The enzyme catalyses L-seryl-[protein] + UDP-N-acetyl-alpha-D-galactosamine = a 3-O-[N-acetyl-alpha-D-galactosaminyl]-L-seryl-[protein] + UDP + H(+). It carries out the reaction L-threonyl-[protein] + UDP-N-acetyl-alpha-D-galactosamine = a 3-O-[N-acetyl-alpha-D-galactosaminyl]-L-threonyl-[protein] + UDP + H(+). It participates in protein modification; protein glycosylation. May catalyze the initial reaction in O-linked oligosaccharide biosynthesis, the transfer of an N-acetyl-D-galactosamine residue to a serine or threonine residue on the protein receptor. The protein is Putative polypeptide N-acetylgalactosaminyltransferase 13 (pgant13) of Drosophila melanogaster (Fruit fly).